The chain runs to 434 residues: GTPase Obg (434 aa).

Residues 1–158 (MFIDRAKIYV…RWLYLELKLL (158 aa)) form the Obg domain. The region spanning 159–328 (ADVGLLGLPN…LLELMEKYVK (170 aa)) is the OBG-type G domain. GTP is bound by residues 165–172 (GLPNAGKS), 190–194 (FTTKT), 211–214 (DIPG), 280–283 (NKID), and 309–311 (SAK). Serine 172 and threonine 192 together coordinate Mg(2+). The 79-residue stretch at 347–425 (KQENKKQEIP…IGNYVFKYNS (79 aa)) folds into the OCT domain.

The protein belongs to the TRAFAC class OBG-HflX-like GTPase superfamily. OBG GTPase family. Monomer. Mg(2+) is required as a cofactor.

The protein resides in the cytoplasm. In terms of biological role, an essential GTPase which binds GTP, GDP and possibly (p)ppGpp with moderate affinity, with high nucleotide exchange rates and a fairly low GTP hydrolysis rate. Plays a role in control of the cell cycle, stress response, ribosome biogenesis and in those bacteria that undergo differentiation, in morphogenesis control. This is GTPase Obg from Dictyoglomus turgidum (strain DSM 6724 / Z-1310).